Consider the following 505-residue polypeptide: MFS efflux pump atnC (505 aa).

12 consecutive transmembrane segments (helical) span residues 48 to 68 (VLQV…GLTV), 117 to 137 (LIGW…IPYG), 148 to 168 (VLLL…LVCW), 181 to 201 (LFQC…ATIA), 216 to 236 (LQAT…VLMA), 240 to 260 (WTPC…LIAL), 304 to 324 (VAGL…LDFL), 343 to 363 (LSLR…LLLF), 377 to 399 (LLIA…LSPT), 403 to 425 (AILV…ASLW), 439 to 459 (TVAI…SLMY), and 469 to 489 (WVGL…GVLL).

Belongs to the major facilitator superfamily.

The protein localises to the membrane. Its pathway is secondary metabolite biosynthesis. Its function is as follows. MFS efflux pump; part of the gene cluster that mediates the biosynthesis of aspercryptins, linear lipopeptides built from six amino acids including 2 highly unusual and nonproteogenic amino acids, 2-amino-octanoic acid (2aoa) and 2-amino-dodecanol (2adol). The protein is MFS efflux pump atnC of Emericella nidulans (strain FGSC A4 / ATCC 38163 / CBS 112.46 / NRRL 194 / M139) (Aspergillus nidulans).